Here is a 374-residue protein sequence, read N- to C-terminus: Alanine racemase (374 aa).

Residue Lys35 is the Proton acceptor; specific for D-alanine of the active site. Lys35 is subject to N6-(pyridoxal phosphate)lysine. Position 130 (Arg130) interacts with substrate. Tyr253 acts as the Proton acceptor; specific for L-alanine in catalysis. Substrate is bound at residue Met305.

Belongs to the alanine racemase family. Requires pyridoxal 5'-phosphate as cofactor.

The catalysed reaction is L-alanine = D-alanine. It participates in amino-acid biosynthesis; D-alanine biosynthesis; D-alanine from L-alanine: step 1/1. Its function is as follows. Catalyzes the interconversion of L-alanine and D-alanine. May also act on other amino acids. The sequence is that of Alanine racemase (alr) from Ralstonia pickettii (strain 12J).